The following is a 233-amino-acid chain: Adenosine 5'-phosphosulfate reductase (233 aa).

Cysteine 120, cysteine 121, cysteine 203, and cysteine 206 together coordinate [4Fe-4S] cluster. Cysteine 229 serves as the catalytic Nucleophile; cysteine thiosulfonate intermediate.

It belongs to the PAPS reductase family. CysH subfamily. The cofactor is [4Fe-4S] cluster.

The protein localises to the cytoplasm. The enzyme catalyses [thioredoxin]-disulfide + sulfite + AMP + 2 H(+) = adenosine 5'-phosphosulfate + [thioredoxin]-dithiol. The protein operates within sulfur metabolism; hydrogen sulfide biosynthesis; sulfite from sulfate. Functionally, catalyzes the formation of sulfite from adenosine 5'-phosphosulfate (APS) using thioredoxin as an electron donor. The sequence is that of Adenosine 5'-phosphosulfate reductase from Lysinibacillus sphaericus (strain C3-41).